The primary structure comprises 329 residues: 4-hydroxy-3-methylbut-2-enyl diphosphate reductase 1 (329 aa).

Position 29 (cysteine 29) interacts with [4Fe-4S] cluster. 2 residues coordinate (2E)-4-hydroxy-3-methylbut-2-enyl diphosphate: histidine 58 and histidine 95. Residues histidine 58 and histidine 95 each coordinate dimethylallyl diphosphate. Residues histidine 58 and histidine 95 each contribute to the isopentenyl diphosphate site. Position 117 (cysteine 117) interacts with [4Fe-4S] cluster. Histidine 145 is a (2E)-4-hydroxy-3-methylbut-2-enyl diphosphate binding site. Histidine 145 lines the dimethylallyl diphosphate pocket. Histidine 145 provides a ligand contact to isopentenyl diphosphate. Glutamate 147 functions as the Proton donor in the catalytic mechanism. Threonine 185 contacts (2E)-4-hydroxy-3-methylbut-2-enyl diphosphate. Cysteine 215 contacts [4Fe-4S] cluster. (2E)-4-hydroxy-3-methylbut-2-enyl diphosphate is bound by residues serine 243, serine 244, asparagine 245, and serine 287. 4 residues coordinate dimethylallyl diphosphate: serine 243, serine 244, asparagine 245, and serine 287. The isopentenyl diphosphate site is built by serine 243, serine 244, asparagine 245, and serine 287.

The protein belongs to the IspH family. Requires [4Fe-4S] cluster as cofactor.

The enzyme catalyses isopentenyl diphosphate + 2 oxidized [2Fe-2S]-[ferredoxin] + H2O = (2E)-4-hydroxy-3-methylbut-2-enyl diphosphate + 2 reduced [2Fe-2S]-[ferredoxin] + 2 H(+). It catalyses the reaction dimethylallyl diphosphate + 2 oxidized [2Fe-2S]-[ferredoxin] + H2O = (2E)-4-hydroxy-3-methylbut-2-enyl diphosphate + 2 reduced [2Fe-2S]-[ferredoxin] + 2 H(+). The protein operates within isoprenoid biosynthesis; dimethylallyl diphosphate biosynthesis; dimethylallyl diphosphate from (2E)-4-hydroxy-3-methylbutenyl diphosphate: step 1/1. It participates in isoprenoid biosynthesis; isopentenyl diphosphate biosynthesis via DXP pathway; isopentenyl diphosphate from 1-deoxy-D-xylulose 5-phosphate: step 6/6. Its function is as follows. Catalyzes the conversion of 1-hydroxy-2-methyl-2-(E)-butenyl 4-diphosphate (HMBPP) into a mixture of isopentenyl diphosphate (IPP) and dimethylallyl diphosphate (DMAPP). Acts in the terminal step of the DOXP/MEP pathway for isoprenoid precursor biosynthesis. The chain is 4-hydroxy-3-methylbut-2-enyl diphosphate reductase 1 from Mycobacterium tuberculosis (strain CDC 1551 / Oshkosh).